The following is a 61-amino-acid chain: Large ribosomal subunit protein bL32 (61 aa).

The span at 1-22 (MAVPKKKTSRARRDRRRSHHAL) shows a compositional bias: basic residues. The interval 1 to 24 (MAVPKKKTSRARRDRRRSHHALRG) is disordered.

It belongs to the bacterial ribosomal protein bL32 family.

This chain is Large ribosomal subunit protein bL32, found in Rubrobacter xylanophilus (strain DSM 9941 / JCM 11954 / NBRC 16129 / PRD-1).